Reading from the N-terminus, the 403-residue chain is Argininosuccinate synthase (403 aa).

Residues 13-21 (AYSGGLDTS) and Ala-40 contribute to the ATP site. The L-citrulline site is built by Tyr-92 and Ser-97. Gly-122 provides a ligand contact to ATP. 3 residues coordinate L-aspartate: Thr-124, Asn-128, and Asp-129. Asn-128 is a binding site for L-citrulline. 5 residues coordinate L-citrulline: Arg-132, Ser-181, Ser-190, Glu-266, and Tyr-278.

Belongs to the argininosuccinate synthase family. Type 1 subfamily. Homotetramer.

Its subcellular location is the cytoplasm. It carries out the reaction L-citrulline + L-aspartate + ATP = 2-(N(omega)-L-arginino)succinate + AMP + diphosphate + H(+). Its pathway is amino-acid biosynthesis; L-arginine biosynthesis; L-arginine from L-ornithine and carbamoyl phosphate: step 2/3. In Aliivibrio fischeri (strain ATCC 700601 / ES114) (Vibrio fischeri), this protein is Argininosuccinate synthase.